Reading from the N-terminus, the 161-residue chain is Protein-export protein SecB (161 aa).

Belongs to the SecB family. As to quaternary structure, homotetramer, a dimer of dimers. One homotetramer interacts with 1 SecA dimer.

The protein localises to the cytoplasm. Its function is as follows. One of the proteins required for the normal export of preproteins out of the cell cytoplasm. It is a molecular chaperone that binds to a subset of precursor proteins, maintaining them in a translocation-competent state. It also specifically binds to its receptor SecA. The polypeptide is Protein-export protein SecB (Afipia carboxidovorans (strain ATCC 49405 / DSM 1227 / KCTC 32145 / OM5) (Oligotropha carboxidovorans)).